The primary structure comprises 537 residues: Lysine--tRNA ligase (537 aa).

Positions 30 to 38 (PSGNIHIGN) match the 'HIGH' region motif. The 'KMSKS' region signature appears at 276-280 (AMSSS).

It belongs to the class-I aminoacyl-tRNA synthetase family.

It localises to the cytoplasm. It catalyses the reaction tRNA(Lys) + L-lysine + ATP = L-lysyl-tRNA(Lys) + AMP + diphosphate. The polypeptide is Lysine--tRNA ligase (Methanosarcina barkeri).